The chain runs to 80 residues: MTNTKTLEENISFEEALKELEEIVKKIDNGQESLETAVNSFERGILLKNHCEKKLKEARLKIEKITKLADSTGVLEETEV.

This sequence belongs to the XseB family. In terms of assembly, heterooligomer composed of large and small subunits.

It localises to the cytoplasm. The catalysed reaction is Exonucleolytic cleavage in either 5'- to 3'- or 3'- to 5'-direction to yield nucleoside 5'-phosphates.. Functionally, bidirectionally degrades single-stranded DNA into large acid-insoluble oligonucleotides, which are then degraded further into small acid-soluble oligonucleotides. This is Exodeoxyribonuclease 7 small subunit from Rickettsia felis (strain ATCC VR-1525 / URRWXCal2) (Rickettsia azadi).